We begin with the raw amino-acid sequence, 138 residues long: Large ribosomal subunit protein bL19 (138 aa).

It belongs to the bacterial ribosomal protein bL19 family.

In terms of biological role, this protein is located at the 30S-50S ribosomal subunit interface and may play a role in the structure and function of the aminoacyl-tRNA binding site. This Rickettsia typhi (strain ATCC VR-144 / Wilmington) protein is Large ribosomal subunit protein bL19.